The following is a 291-amino-acid chain: Acetyl-coenzyme A carboxylase carboxyl transferase subunit beta (291 aa).

The region spanning Val-23 to Ser-291 is the CoA carboxyltransferase N-terminal domain.

It belongs to the AccD/PCCB family. As to quaternary structure, acetyl-CoA carboxylase is a heterohexamer composed of biotin carboxyl carrier protein (AccB), biotin carboxylase (AccC) and two subunits each of ACCase subunit alpha (AccA) and ACCase subunit beta (AccD).

The protein resides in the cytoplasm. It carries out the reaction N(6)-carboxybiotinyl-L-lysyl-[protein] + acetyl-CoA = N(6)-biotinyl-L-lysyl-[protein] + malonyl-CoA. Its pathway is lipid metabolism; malonyl-CoA biosynthesis; malonyl-CoA from acetyl-CoA: step 1/1. In terms of biological role, component of the acetyl coenzyme A carboxylase (ACC) complex. Biotin carboxylase (BC) catalyzes the carboxylation of biotin on its carrier protein (BCCP) and then the CO(2) group is transferred by the transcarboxylase to acetyl-CoA to form malonyl-CoA. The polypeptide is Acetyl-coenzyme A carboxylase carboxyl transferase subunit beta (Opitutus terrae (strain DSM 11246 / JCM 15787 / PB90-1)).